A 340-amino-acid chain; its full sequence is GTPase Obg (340 aa).

One can recognise an Obg domain in the interval 1–159; the sequence is MKFLDQAKVY…RTLWLRLKLI (159 aa). In terms of domain architecture, OBG-type G spans 160-327; the sequence is ADAGIIGLPN…LLRAGAHIIE (168 aa). Residues 166 to 173, 191 to 195, 212 to 215, 279 to 282, and 308 to 310 contribute to the GTP site; these read GLPNAGKS, FTTLY, DIPG, SQID, and SAV. The Mg(2+) site is built by S173 and T193.

This sequence belongs to the TRAFAC class OBG-HflX-like GTPase superfamily. OBG GTPase family. As to quaternary structure, monomer. Mg(2+) is required as a cofactor.

The protein localises to the cytoplasm. In terms of biological role, an essential GTPase which binds GTP, GDP and possibly (p)ppGpp with moderate affinity, with high nucleotide exchange rates and a fairly low GTP hydrolysis rate. Plays a role in control of the cell cycle, stress response, ribosome biogenesis and in those bacteria that undergo differentiation, in morphogenesis control. The sequence is that of GTPase Obg from Bartonella henselae (strain ATCC 49882 / DSM 28221 / CCUG 30454 / Houston 1) (Rochalimaea henselae).